Reading from the N-terminus, the 491-residue chain is Probable glycine dehydrogenase (decarboxylating) subunit 2 (491 aa).

Position 273 is an N6-(pyridoxal phosphate)lysine (Lys273).

Belongs to the GcvP family. C-terminal subunit subfamily. In terms of assembly, the glycine cleavage system is composed of four proteins: P, T, L and H. In this organism, the P 'protein' is a heterodimer of two subunits. Pyridoxal 5'-phosphate serves as cofactor.

It catalyses the reaction N(6)-[(R)-lipoyl]-L-lysyl-[glycine-cleavage complex H protein] + glycine + H(+) = N(6)-[(R)-S(8)-aminomethyldihydrolipoyl]-L-lysyl-[glycine-cleavage complex H protein] + CO2. Functionally, the glycine cleavage system catalyzes the degradation of glycine. The P protein binds the alpha-amino group of glycine through its pyridoxal phosphate cofactor; CO(2) is released and the remaining methylamine moiety is then transferred to the lipoamide cofactor of the H protein. The sequence is that of Probable glycine dehydrogenase (decarboxylating) subunit 2 from Bacillus thuringiensis (strain Al Hakam).